The chain runs to 77 residues: Large ribosomal subunit protein bL28 (77 aa).

This sequence belongs to the bacterial ribosomal protein bL28 family.

This Variovorax paradoxus (strain S110) protein is Large ribosomal subunit protein bL28.